We begin with the raw amino-acid sequence, 789 residues long: Aconitate hydratase, mitochondrial (789 aa).

Residues 1–32 constitute a mitochondrion transit peptide; the sequence is MFCKISRAPARMGSRIFTQSTLRSFSCAPVAA. Residues Gln106 and 199–201 contribute to the substrate site; that span reads DSH. Residues Cys392, Cys455, and Cys458 each contribute to the [4Fe-4S] cluster site. Substrate contacts are provided by residues Arg481, Arg486, Arg613, and 676–677; that span reads SR.

The protein belongs to the aconitase/IPM isomerase family. As to quaternary structure, monomer. Requires [4Fe-4S] cluster as cofactor.

It localises to the mitochondrion. The enzyme catalyses citrate = D-threo-isocitrate. Its pathway is carbohydrate metabolism; tricarboxylic acid cycle; isocitrate from oxaloacetate: step 2/2. Its function is as follows. Catalyzes the isomerization of citrate to isocitrate via cis-aconitate, a step in the citric acid cycle. This Schizosaccharomyces pombe (strain 972 / ATCC 24843) (Fission yeast) protein is Aconitate hydratase, mitochondrial.